We begin with the raw amino-acid sequence, 479 residues long: Glutamyl-tRNA(Gln) amidotransferase subunit A (479 aa).

Residues lysine 75 and serine 150 each act as charge relay system in the active site. Serine 174 functions as the Acyl-ester intermediate in the catalytic mechanism.

It belongs to the amidase family. GatA subfamily. As to quaternary structure, heterotrimer of A, B and C subunits.

The catalysed reaction is L-glutamyl-tRNA(Gln) + L-glutamine + ATP + H2O = L-glutaminyl-tRNA(Gln) + L-glutamate + ADP + phosphate + H(+). Allows the formation of correctly charged Gln-tRNA(Gln) through the transamidation of misacylated Glu-tRNA(Gln) in organisms which lack glutaminyl-tRNA synthetase. The reaction takes place in the presence of glutamine and ATP through an activated gamma-phospho-Glu-tRNA(Gln). This Synechococcus sp. (strain ATCC 27144 / PCC 6301 / SAUG 1402/1) (Anacystis nidulans) protein is Glutamyl-tRNA(Gln) amidotransferase subunit A.